Consider the following 106-residue polypeptide: UPF0060 membrane protein RL1530 (106 aa).

A run of 4 helical transmembrane segments spans residues 4–24, 30–50, 58–78, and 86–106; these read IIFA…WAWL, VWWL…LTLV, TFAA…WLVE, and DIGG…APRG.

Belongs to the UPF0060 family.

It localises to the cell inner membrane. This chain is UPF0060 membrane protein RL1530, found in Rhizobium johnstonii (strain DSM 114642 / LMG 32736 / 3841) (Rhizobium leguminosarum bv. viciae).